A 276-amino-acid chain; its full sequence is Large ribosomal subunit protein uL2 (276 aa).

Disordered regions lie at residues 36 to 55 (PLPR…RHRG) and 219 to 276 (TVRG…GRKK). Residues 255–276 (LGKKTRKKKNRSNKLIVRGRKK) are compositionally biased toward basic residues.

It belongs to the universal ribosomal protein uL2 family. Part of the 50S ribosomal subunit. Forms a bridge to the 30S subunit in the 70S ribosome.

One of the primary rRNA binding proteins. Required for association of the 30S and 50S subunits to form the 70S ribosome, for tRNA binding and peptide bond formation. It has been suggested to have peptidyltransferase activity; this is somewhat controversial. Makes several contacts with the 16S rRNA in the 70S ribosome. The polypeptide is Large ribosomal subunit protein uL2 (Macrococcus caseolyticus (strain JCSC5402) (Macrococcoides caseolyticum)).